Consider the following 96-residue polypeptide: Co-chaperonin GroES (96 aa).

This sequence belongs to the GroES chaperonin family. In terms of assembly, heptamer of 7 subunits arranged in a ring. Interacts with the chaperonin GroEL.

It localises to the cytoplasm. In terms of biological role, together with the chaperonin GroEL, plays an essential role in assisting protein folding. The GroEL-GroES system forms a nano-cage that allows encapsulation of the non-native substrate proteins and provides a physical environment optimized to promote and accelerate protein folding. GroES binds to the apical surface of the GroEL ring, thereby capping the opening of the GroEL channel. This chain is Co-chaperonin GroES, found in Shewanella loihica (strain ATCC BAA-1088 / PV-4).